Reading from the N-terminus, the 230-residue chain is Porin OmpL (230 aa).

The N-terminal stretch at 1–20 is a signal peptide; sequence MKNINAIILLSSLTSASVFA.

The protein belongs to the oligogalacturonate-specific porin KdgM (TC 1.B.35) family. OmpL subfamily.

It is found in the cell outer membrane. Functionally, outer membrane channel protein that allows an efficient diffusion of low-molecular-weight solutes such as small sugars and tetraglycine. However, the specific substrate recognized by the OmpL channel is unknown. The chain is Porin OmpL (ompL) from Escherichia coli O157:H7.